Reading from the N-terminus, the 614-residue chain is High-affinity choline transporter 1 (614 aa).

A helical transmembrane segment spans residues 6 to 26 (GVVSIVLFYLLILVVGIWAGR). Residues 27-44 (KKQSGNDSEEEVMLAGRS) lie on the Cytoplasmic side of the membrane. Residues 45–65 (IGLFVGIFTMTATWVGGGYIN) traverse the membrane as a helical segment. The Extracellular portion of the chain corresponds to 66–75 (GTAEAIYTSG). Residues 76–96 (LVWCQAPFGYALSLVFGGIFF) form a helical membrane-spanning segment. The Cytoplasmic portion of the chain corresponds to 97-119 (ANPMRKQGYITMLDPLQDSFGER). The helical transmembrane segment at 120-140 (MGGLLFLPALCGEVFWAAGIL) threads the bilayer. Residues 141 to 158 (AALGATLSVIIDMDHRTS) are Extracellular-facing. Residues 159-179 (VILSSCIAIFYTLFGGLYSVA) traverse the membrane as a helical segment. The Cytoplasmic segment spans residues 180–185 (YTDVIQ). A helical membrane pass occupies residues 186–206 (LFCIFIGLWMCIPFAWSNEHV). Residues 207–225 (GSLSDLEVDWIGHVEPKKH) lie on the Extracellular side of the membrane. A helical transmembrane segment spans residues 226-246 (WLYIDYGLLLVFGGIPWQVYF). Over 247 to 262 (QRVLSSKTAGRAQLLS) the chain is Cytoplasmic. Residues 263–283 (YVAAAGCILMAIPPVLIGAIA) traverse the membrane as a helical segment. The Extracellular portion of the chain corresponds to 284–305 (KATPWNETDYKGPYPLTVDETS). A glycan (N-linked (GlcNAc...) asparagine) is linked at Asn289. Residues 306–326 (MILPMVLQYLTPDFVSFFGLG) traverse the membrane as a helical segment. The Cytoplasmic portion of the chain corresponds to 327–364 (AVSAAVMSSADSSVLSAASMFARNVYKLIFRQKASEME). The helical transmembrane segment at 365-385 (IIWVMRVAIIVVGILATIMAL) threads the bilayer. At 386–394 (TIPSIYGLW) the chain is on the extracellular side. A helical membrane pass occupies residues 395–415 (SMCSDLVYVILFPQLLMVVHF). Residues 416–424 (KKHCNTYGS) are Cytoplasmic-facing. The chain crosses the membrane as a helical span at residues 425-445 (LSAYIVALAIRLSGGEAILGL). Over 446–467 (APLIKYPGYDEETKEQMFPFRT) the chain is Extracellular. The helical transmembrane segment at 468-488 (MAMLLSLVTLISVSWWTKMMF) threads the bilayer. The Cytoplasmic segment spans residues 489 to 614 (ESGKLPPSYD…PTAEQDNTAF (126 aa)). The interval 583–614 (ATGVKPSGGGGGHLQSQSGMAMPTAEQDNTAF) is disordered.

This sequence belongs to the sodium:solute symporter (SSF) (TC 2.A.21) family.

The protein localises to the membrane. Imports choline from the extracellular space to the neuron with high affinity. Rate-limiting step in acetylcholine synthesis. Sodium ion and chloride ion dependent. The sequence is that of High-affinity choline transporter 1 from Drosophila melanogaster (Fruit fly).